An 82-amino-acid chain; its full sequence is Cytochrome b559 subunit alpha (82 aa).

A helical membrane pass occupies residues 22–36 (IIHAVTLPAIFIAGF). A heme-binding site is contributed by H24.

This sequence belongs to the PsbE/PsbF family. As to quaternary structure, heterodimer of an alpha subunit and a beta subunit. PSII is composed of 1 copy each of membrane proteins PsbA, PsbB, PsbC, PsbD, PsbE, PsbF, PsbH, PsbI, PsbJ, PsbK, PsbL, PsbM, PsbT, PsbX, PsbY, Psb30/Ycf12, peripheral proteins PsbO, CyanoQ (PsbQ), PsbU, PsbV and a large number of cofactors. It forms dimeric complexes. The cofactor is heme b.

The protein localises to the cellular thylakoid membrane. In terms of biological role, this b-type cytochrome is tightly associated with the reaction center of photosystem II (PSII). PSII is a light-driven water:plastoquinone oxidoreductase that uses light energy to abstract electrons from H(2)O, generating O(2) and a proton gradient subsequently used for ATP formation. It consists of a core antenna complex that captures photons, and an electron transfer chain that converts photonic excitation into a charge separation. This is Cytochrome b559 subunit alpha from Prochlorococcus marinus (strain MIT 9515).